The primary structure comprises 171 residues: NADH-quinone oxidoreductase subunit C (171 aa).

It belongs to the complex I 30 kDa subunit family. NDH-1 is composed of 14 different subunits. Subunits NuoB, C, D, E, F, and G constitute the peripheral sector of the complex.

It localises to the cell membrane. It catalyses the reaction a quinone + NADH + 5 H(+)(in) = a quinol + NAD(+) + 4 H(+)(out). Functionally, NDH-1 shuttles electrons from NADH, via FMN and iron-sulfur (Fe-S) centers, to quinones in the respiratory chain. The immediate electron acceptor for the enzyme in this species is believed to be ubiquinone. Couples the redox reaction to proton translocation (for every two electrons transferred, four hydrogen ions are translocated across the cytoplasmic membrane), and thus conserves the redox energy in a proton gradient. The polypeptide is NADH-quinone oxidoreductase subunit C (Herpetosiphon aurantiacus (strain ATCC 23779 / DSM 785 / 114-95)).